The chain runs to 852 residues: Translation initiation factor IF-2 (852 aa).

Residues 1–240 (MEDKNKTIKE…KTSSDKRDFS (240 aa)) form a disordered region. A compositionally biased stretch (basic and acidic residues) spans 78-90 (KEVKYEESSRKQD). The span at 106–120 (VRPSGDSSYPVSRSP) shows a compositional bias: polar residues. The segment covering 150 to 200 (RGPGQGGGYQGNRGPGQGGGYQGNRGPGQQTGPGNRFGGSGPGNRSGGPGG) has biased composition (gly residues). Positions 227–240 (HDKEKTSSDKRDFS) are enriched in basic and acidic residues. Residues 347–516 (NRPPVVTIMG…LLQAEVMDLK (170 aa)) form the tr-type G domain. A G1 region spans residues 356–363 (GHVDHGKT). Position 356 to 363 (356 to 363 (GHVDHGKT)) interacts with GTP. Residues 381–385 (GITQH) form a G2 region. A G3 region spans residues 402 to 405 (DTPG). GTP contacts are provided by residues 402 to 406 (DTPGH) and 456 to 459 (NKID). The interval 456–459 (NKID) is G4. Residues 492–494 (SAR) form a G5 region.

Belongs to the TRAFAC class translation factor GTPase superfamily. Classic translation factor GTPase family. IF-2 subfamily.

The protein resides in the cytoplasm. In terms of biological role, one of the essential components for the initiation of protein synthesis. Protects formylmethionyl-tRNA from spontaneous hydrolysis and promotes its binding to the 30S ribosomal subunits. Also involved in the hydrolysis of GTP during the formation of the 70S ribosomal complex. This chain is Translation initiation factor IF-2, found in Leptospira borgpetersenii serovar Hardjo-bovis (strain JB197).